Here is a 78-residue protein sequence, read N- to C-terminus: Large ribosomal subunit protein bL28 (78 aa).

Belongs to the bacterial ribosomal protein bL28 family.

The chain is Large ribosomal subunit protein bL28 from Proteus mirabilis (strain HI4320).